Consider the following 363-residue polypeptide: NAD(P)H-quinone oxidoreductase subunit 1, chloroplastic (363 aa).

6 consecutive transmembrane segments (helical) span residues 27-47, 98-118, 127-147, 248-268, 300-320, and 336-356; these read IWLL…VLVI, FSIG…VIPF, LSIG…GLLM, YSGI…LVSS, VFGT…FLFI, and LLNL…LLTT.

This sequence belongs to the complex I subunit 1 family. As to quaternary structure, NDH is composed of at least 16 different subunits, 5 of which are encoded in the nucleus.

The protein resides in the plastid. It is found in the chloroplast thylakoid membrane. It catalyses the reaction a plastoquinone + NADH + (n+1) H(+)(in) = a plastoquinol + NAD(+) + n H(+)(out). The catalysed reaction is a plastoquinone + NADPH + (n+1) H(+)(in) = a plastoquinol + NADP(+) + n H(+)(out). Its function is as follows. NDH shuttles electrons from NAD(P)H:plastoquinone, via FMN and iron-sulfur (Fe-S) centers, to quinones in the photosynthetic chain and possibly in a chloroplast respiratory chain. The immediate electron acceptor for the enzyme in this species is believed to be plastoquinone. Couples the redox reaction to proton translocation, and thus conserves the redox energy in a proton gradient. This Platanus occidentalis (Sycamore) protein is NAD(P)H-quinone oxidoreductase subunit 1, chloroplastic.